The following is a 264-amino-acid chain: MKQYLDFMRHVYEHGTDKADRTGTGTRSVFGYQMRFDLRAGFPVVTTKKLHLKSIIYELLWFLQGSTNVRWLQEHGVTIWDEWADENGELGPVYGSQWRSWPTPDGRHIDQITDLVAQIRANPDSRRLIVSAWNVADIPRMKLPPCHAFFQFYVADGRLSCQLYQRSADIFLGVPFNIASYALLTHMMAQQTGLEVGDFVWTGGDCHLYNNHFEQVQTQLAREPLALPQLKILRKPDSIFDYRYEDFELAGYQSHAAIKAPVAV.

A dUMP-binding site is contributed by Arg-21. His-51 lines the (6R)-5,10-methylene-5,6,7,8-tetrahydrofolate pocket. 126–127 (RR) lines the dUMP pocket. Residue Cys-146 is the Nucleophile of the active site. Residues 166 to 169 (RSAD), Asn-177, and 207 to 209 (HLY) each bind dUMP. Position 169 (Asp-169) interacts with (6R)-5,10-methylene-5,6,7,8-tetrahydrofolate. Ala-263 is a binding site for (6R)-5,10-methylene-5,6,7,8-tetrahydrofolate.

The protein belongs to the thymidylate synthase family. Bacterial-type ThyA subfamily. In terms of assembly, homodimer.

It localises to the cytoplasm. The catalysed reaction is dUMP + (6R)-5,10-methylene-5,6,7,8-tetrahydrofolate = 7,8-dihydrofolate + dTMP. Its pathway is pyrimidine metabolism; dTTP biosynthesis. Its function is as follows. Catalyzes the reductive methylation of 2'-deoxyuridine-5'-monophosphate (dUMP) to 2'-deoxythymidine-5'-monophosphate (dTMP) while utilizing 5,10-methylenetetrahydrofolate (mTHF) as the methyl donor and reductant in the reaction, yielding dihydrofolate (DHF) as a by-product. This enzymatic reaction provides an intracellular de novo source of dTMP, an essential precursor for DNA biosynthesis. This chain is Thymidylate synthase, found in Cupriavidus necator (strain ATCC 17699 / DSM 428 / KCTC 22496 / NCIMB 10442 / H16 / Stanier 337) (Ralstonia eutropha).